A 180-amino-acid polypeptide reads, in one-letter code: WPP domain-containing protein 2 (180 aa).

Positions 1–26 (MAETAETINTTISSPPPESESSTTIS) are enriched in low complexity. Disordered regions lie at residues 1 to 61 (MAET…LRIW) and 140 to 180 (SVKA…KSEA). The span at 27–36 (AMTDPTSQEA) shows a compositional bias: polar residues. Positions 37-53 (ASKDTDLTKEAESEKKP) are enriched in basic and acidic residues. Residues 44 to 147 (TKEAESEKKP…LESVKARSNA (104 aa)) are WPP. At Ser173 the chain carries Phosphoserine.

Binds to FPP proteins. Interacts with WAP, WIP1, WIP2 and WIP3 through its WPP domain. Interacts with WIT1 and HSP70-1. In terms of tissue distribution, expressed in roots, stems, leaves and flowers.

It is found in the nucleus envelope. Its subcellular location is the cytoplasm. The protein localises to the nucleus. The protein resides in the golgi apparatus. Functionally, regulates the mitotic activity in roots. Plays a role with HSP70-1 in facilitating WIT1 nuclear envelope targeting. The protein is WPP domain-containing protein 2 (WPP2) of Arabidopsis thaliana (Mouse-ear cress).